The primary structure comprises 109 residues: Parvalbumin beta (109 aa).

Ala2 is subject to N-acetylalanine. An igE-binding region spans residues 22-41 (AGSFDHKKFFKACGLSGKST). 2 EF-hand domains span residues 39–74 (KSTDEVKKAFAIIDQDKSGFIEEEELKLFLQNFKAG) and 78–109 (LSDAETKAFLKAGDSDGDGKIGIDEFAAMIKG). The Ca(2+) site is built by Asp52, Asp54, Ser56, Phe58, Glu60, Glu63, Asp91, Asp93, Asp95, Lys97, and Glu102.

This sequence belongs to the parvalbumin family. In terms of processing, the N-terminus is blocked. In terms of tissue distribution, expressed in both white and dark muscles (at protein level). About eight and a half times lower expression in the dark muscle than in the white muscle (at protein level).

Its function is as follows. In muscle, parvalbumin is thought to be involved in relaxation after contraction. It binds two calcium ions. This chain is Parvalbumin beta, found in Scomber japonicus (Chub mackerel).